The following is a 240-amino-acid chain: Aliphatic sulfonates import ATP-binding protein SsuB 2 (240 aa).

An ABC transporter domain is found at 2–218 (VRTRELRRGF…RHSAPEFIHA (217 aa)). 34–41 (GRSGSGKS) lines the ATP pocket.

Belongs to the ABC transporter superfamily. Aliphatic sulfonates importer (TC 3.A.1.17.2) family. As to quaternary structure, the complex is composed of two ATP-binding proteins (SsuB), two transmembrane proteins (SsuC) and a solute-binding protein (SsuA).

The protein localises to the cell membrane. It carries out the reaction ATP + H2O + aliphatic sulfonate-[sulfonate-binding protein]Side 1 = ADP + phosphate + aliphatic sulfonateSide 2 + [sulfonate-binding protein]Side 1.. Part of the ABC transporter complex SsuABC involved in aliphatic sulfonates import. Responsible for energy coupling to the transport system. This chain is Aliphatic sulfonates import ATP-binding protein SsuB 2, found in Nocardia farcinica (strain IFM 10152).